The following is a 123-amino-acid chain: Gamma-synuclein (123 aa).

Repeat copies occupy residues 20–30 (EKTKQGVTEAA) and 31–41 (EKTKEGVMYVG). Residues 20 to 67 (EKTKQGVTEAAEKTKEGVMYVGTKTKENVVQSVTSVAEKTKEQANAVS) are 4 X 11 AA tandem repeats of [EGSA]-K-T-K-[EQ]-[GQ]-V-X(4). The 3; approximate repeat unit spans residues 42–56 (TKTKENVVQSVTSVA). Residues 57-67 (EKTKEQANAVS) form repeat 4. Residues Ser67 and Ser72 each carry the phosphoserine modification. The tract at residues 91–123 (TTGVVRKEDLEPPAQDQEAKEQEENEEAKSGED) is disordered. A compositionally biased stretch (basic and acidic residues) spans 107–123 (QEAKEQEENEEAKSGED). Ser120 bears the Phosphoserine; by BARK1, CaMK2 and CK2 mark.

Belongs to the synuclein family. As to quaternary structure, may be a centrosome-associated protein. Interacts with MYOC; affects its secretion and its aggregation. Phosphorylated. Phosphorylation by GRK5 appears to occur on residues distinct from the residue phosphorylated by other kinases. As to expression, highly expressed in brain, particularly in the substantia nigra. Also expressed in the corpus callosum, heart, skeletal muscle, ovary, testis, colon and spleen. Weak expression in pancreas, kidney and lung. Expressed predominantly in the cell bodies and axons of primary sensory neurons, sympathetic neurons and motoneurons.

The protein resides in the cytoplasm. It localises to the perinuclear region. It is found in the cytoskeleton. Its subcellular location is the microtubule organizing center. The protein localises to the centrosome. The protein resides in the spindle. Functionally, plays a role in neurofilament network integrity. May be involved in modulating axonal architecture during development and in the adult. In vitro, increases the susceptibility of neurofilament-H to calcium-dependent proteases. May also function in modulating the keratin network in skin. Activates the MAPK and Elk-1 signal transduction pathway. This is Gamma-synuclein (Sncg) from Mus musculus (Mouse).